A 182-amino-acid chain; its full sequence is UPF0397 protein BCA_2731 (182 aa).

A run of 5 helical transmembrane segments spans residues 9–29 (VVAIGIGAALYGILGLWGFSI), 40–60 (AILTVFGALFGPVAGLLIGLI), 71–91 (WGIWWGWVISSGIIGFAMGLI), 114–134 (ITGLIGIVIAIIFAGAFDIIV), and 142–162 (IVIQVLGATIADVIVFLVLGL).

This sequence belongs to the UPF0397 family.

The protein localises to the cell membrane. This is UPF0397 protein BCA_2731 from Bacillus cereus (strain 03BB102).